Reading from the N-terminus, the 449-residue chain is Exodeoxyribonuclease 7 large subunit (449 aa).

The protein belongs to the XseA family. As to quaternary structure, heterooligomer composed of large and small subunits.

The protein resides in the cytoplasm. It catalyses the reaction Exonucleolytic cleavage in either 5'- to 3'- or 3'- to 5'-direction to yield nucleoside 5'-phosphates.. In terms of biological role, bidirectionally degrades single-stranded DNA into large acid-insoluble oligonucleotides, which are then degraded further into small acid-soluble oligonucleotides. This chain is Exodeoxyribonuclease 7 large subunit, found in Salmonella paratyphi A (strain ATCC 9150 / SARB42).